A 1821-amino-acid chain; its full sequence is PH-interacting protein (1821 aa).

Serine 136 carries the phosphoserine modification. 5 WD repeats span residues glycine 181–arginine 222, histidine 224–valine 262, glycine 265–arginine 310, arginine 319–glutamate 360, and phenylalanine 363–isoleucine 402. Residue lysine 421 forms a Glycyl lysine isopeptide (Lys-Gly) (interchain with G-Cter in SUMO2) linkage. WD repeat units lie at residues isoleucine 422–valine 461, glycine 464–serine 504, and glutamine 512–lysine 551. 6 positions are modified to phosphoserine: serine 641, serine 659, serine 674, serine 677, serine 683, and serine 692. 2 disordered regions span residues glutamate 653–isoleucine 695 and aspartate 782–valine 927. Over residues serine 665–valine 681 the composition is skewed to polar residues. Over residues serine 800 to glutamate 810 the composition is skewed to basic and acidic residues. A compositionally biased stretch (low complexity) spans serine 841 to aspartate 854. Serine 879, serine 880, serine 881, and serine 911 each carry phosphoserine. The segment covering proline 912–arginine 924 has biased composition (basic residues). Residues arginine 924–phenylalanine 1129 are mediates interaction with IRS1. One can recognise a Bromo 1 domain in the interval tryptophan 1156–glutamine 1263. Phosphoserine occurs at positions 1281, 1283, and 1296. The segment at aspartate 1282–arginine 1310 is disordered. Positions threonine 1297 to arginine 1310 are enriched in basic residues. A Phosphoserine modification is found at serine 1315. The Bromo 2 domain occupies tyrosine 1316–valine 1421. Threonine 1359 is modified (phosphothreonine). Serine 1405 carries the post-translational modification Phosphoserine. Residues asparagine 1435 to arginine 1446 are compositionally biased toward basic residues. The disordered stretch occupies residues asparagine 1435 to arginine 1507. A compositionally biased stretch (low complexity) spans serine 1447–serine 1457. Lysine 1470 participates in a covalent cross-link: Glycyl lysine isopeptide (Lys-Gly) (interchain with G-Cter in SUMO1); alternate. A Glycyl lysine isopeptide (Lys-Gly) (interchain with G-Cter in SUMO2); alternate cross-link involves residue lysine 1470. The span at serine 1471 to threonine 1482 shows a compositional bias: polar residues. Phosphoserine is present on serine 1479. N6-acetyllysine is present on lysine 1497. Serine 1525 bears the Phosphoserine mark. Lysine 1533 carries the post-translational modification N6-acetyllysine. Residues serine 1556 to lysine 1576 are compositionally biased toward polar residues. 3 disordered regions span residues serine 1556–lysine 1596, glutamine 1623–glutamine 1676, and arginine 1740–glutamate 1785. A Phosphoserine modification is found at serine 1560. Lysine 1644 is covalently cross-linked (Glycyl lysine isopeptide (Lys-Gly) (interchain with G-Cter in SUMO2)). The residue at position 1651 (serine 1651) is a Phosphoserine. Lysine 1670 is covalently cross-linked (Glycyl lysine isopeptide (Lys-Gly) (interchain with G-Cter in SUMO2)). A phosphoserine mark is found at serine 1762 and serine 1783.

In terms of assembly, interacts (via bromo domain) with acetylated lysine residues on histone H1.4, histone H3 and H4 (in vitro). Interacts with IRS1 and IRS2. Widely expressed with most abundant expression detected in pancreatic islets, brain and skeletal muscle. Predominantly expressed in developing and regenerating neurons. Expressed in adult brain (granular layer of the olfactorium bulb, hippocampus, dentate gyrus and cerebellum internal granular layer). Expressed in the CA3 region of adult hippocampus, adult and fetal retina, perinatal dorsal root ganglion and embryonal olfactory epithelia (at protein level).

It localises to the nucleus. Probable regulator of the insulin and insulin-like growth factor signaling pathways. Stimulates cell proliferation through regulation of cyclin transcription and has an anti-apoptotic activity through AKT1 phosphorylation and activation. Plays a role in the regulation of cell morphology and cytoskeletal organization. The sequence is that of PH-interacting protein (Phip) from Mus musculus (Mouse).